The sequence spans 402 residues: S-adenosylmethionine synthase (402 aa).

An ATP-binding site is contributed by H16. A Mg(2+)-binding site is contributed by D18. E44 is a binding site for K(+). L-methionine contacts are provided by E57 and Q103. The interval 103–113 (QSPDIAQGVDT) is flexible loop. Residues 178-180 (DGK), 249-250 (KF), D258, 264-265 (RK), A281, and K285 each bind ATP. D258 is an L-methionine binding site. K289 is an L-methionine binding site.

The protein belongs to the AdoMet synthase family. As to quaternary structure, homotetramer; dimer of dimers. It depends on Mg(2+) as a cofactor. K(+) is required as a cofactor.

The protein localises to the cytoplasm. It catalyses the reaction L-methionine + ATP + H2O = S-adenosyl-L-methionine + phosphate + diphosphate. The protein operates within amino-acid biosynthesis; S-adenosyl-L-methionine biosynthesis; S-adenosyl-L-methionine from L-methionine: step 1/1. In terms of biological role, catalyzes the formation of S-adenosylmethionine (AdoMet) from methionine and ATP. The overall synthetic reaction is composed of two sequential steps, AdoMet formation and the subsequent tripolyphosphate hydrolysis which occurs prior to release of AdoMet from the enzyme. This is S-adenosylmethionine synthase from Mycolicibacterium vanbaalenii (strain DSM 7251 / JCM 13017 / BCRC 16820 / KCTC 9966 / NRRL B-24157 / PYR-1) (Mycobacterium vanbaalenii).